Here is a 162-residue protein sequence, read N- to C-terminus: Disulfide bond formation protein B (162 aa).

Topologically, residues 1 to 8 (MTPLFRKA) are cytoplasmic. The helical transmembrane segment at 9 to 25 (VWLLFAVSVCAFAGSLA) threads the bilayer. The Periplasmic portion of the chain corresponds to 26-43 (AQYVLGMEPCVLCISQRL). A disulfide bridge links C35 with C38. A helical transmembrane segment spans residues 44–60 (CVLATALCTAIVLMCRP). Residues 61–67 (RRRAGGL) are Cytoplasmic-facing. A helical transmembrane segment spans residues 68–85 (FGAVFISIPAVTGISVAA). Residues 86–141 (YQLWLQSLPPGTAPSCGAPWTFRLKGWPLFDWFEPVVRGFGNCAEPDYLLGIALPV) lie on the Periplasmic side of the membrane. A disulfide bond links C101 and C128. The chain crosses the membrane as a helical span at residues 142 to 160 (WSVAYFLAVVLTVWWAWAR). Topologically, residues 161 to 162 (AK) are cytoplasmic.

The protein belongs to the DsbB family.

It is found in the cell inner membrane. Functionally, required for disulfide bond formation in some periplasmic proteins. Acts by oxidizing the DsbA protein. The polypeptide is Disulfide bond formation protein B (Neisseria meningitidis serogroup B (strain ATCC BAA-335 / MC58)).